A 363-amino-acid polypeptide reads, in one-letter code: Peptide chain release factor 2 (363 aa).

Gln-251 is subject to N5-methylglutamine.

Belongs to the prokaryotic/mitochondrial release factor family. Post-translationally, methylated by PrmC. Methylation increases the termination efficiency of RF2.

The protein resides in the cytoplasm. In terms of biological role, peptide chain release factor 2 directs the termination of translation in response to the peptide chain termination codons UGA and UAA. The chain is Peptide chain release factor 2 from Helicobacter pylori (strain HPAG1).